Here is a 413-residue protein sequence, read N- to C-terminus: tRNA (guanine-N(7)-)-methyltransferase non-catalytic subunit WDR4 (413 aa).

N-acetylalanine is present on A2. WD repeat units lie at residues 61–100, 102–141, 145–185, 188–228, and 289–329; these read TGSD…CLSV, MVVR…GCGR, GHLS…IESF, GHTE…QLQC, and TFPH…WQAA. A disordered region spans residues 380–413; the sequence is RLQQQLKKKRQRSPFPGSPEQTKKACPGQSALSC. S392 and S412 each carry phosphoserine.

This sequence belongs to the WD repeat TRM82 family. Non-catalytic component of the METTL1-WDR4 complex, composed of METTL1 and WDR4. Interacts with FEN1; the interaction is direct.

The protein resides in the nucleus. It is found in the chromosome. The protein operates within tRNA modification; N(7)-methylguanine-tRNA biosynthesis. Its function is as follows. Non-catalytic component of the METTL1-WDR4 methyltransferase complex required for the formation of N(7)-methylguanine in a subset of RNA species, such as tRNAs, mRNAs and microRNAs (miRNAs). In the METTL1-WDR4 methyltransferase complex, WDR4 acts as a scaffold for tRNA-binding. Required for the formation of N(7)-methylguanine at position 46 (m7G46) in a large subset of tRNAs that contain the 5'-RAGGU-3' motif within the variable loop. M7G46 interacts with C13-G22 in the D-loop to stabilize tRNA tertiary structure and protect tRNAs from decay. Also required for the formation of N(7)-methylguanine at internal sites in a subset of mRNAs. Also required for methylation of a specific subset of miRNAs, such as let-7. Acts as a regulator of embryonic stem cell self-renewal and differentiation. Independently of METTL1, also plays a role in genome stability: localizes at the DNA replication site and regulates endonucleolytic activities of FEN1. This is tRNA (guanine-N(7)-)-methyltransferase non-catalytic subunit WDR4 from Mus musculus (Mouse).